A 397-amino-acid chain; its full sequence is E3 ubiquitin-protein ligase RNF149 (397 aa).

A signal peptide spans 1 to 20 (MLRWLCLYSALCALTHGSSA). Polar residues predominate over residues 39-49 (TNSSVTGSTES). The tract at residues 39–60 (TNSSVTGSTESGRYGDSSPKES) is disordered. 2 N-linked (GlcNAc...) asparagine glycosylation sites follow: asparagine 40 and asparagine 140. In terms of domain architecture, PA spans 83–170 (YIVPGTSAAA…PKGMEIMEPL (88 aa)). Residues 196–216 (VVFVAIAFITMMIISLAWLIF) traverse the membrane as a helical segment. N-linked (GlcNAc...) asparagine glycosylation occurs at asparagine 231. An RING-type; atypical zinc finger spans residues 264-305 (CAVCIENYKTKDLVRILPCKHIFHRLCIDPWLIEHRTCPMCK). The disordered stretch occupies residues 341–397 (SITQEESRSEGNNLPSSSTGSSLQQSNSVKDDAGETTALLDDPGNDNAAATHTQDSH). Residues 351 to 368 (GNNLPSSSTGSSLQQSNS) are compositionally biased toward low complexity. Positions 388–397 (AAATHTQDSH) are enriched in polar residues.

The protein localises to the membrane. The enzyme catalyses S-ubiquitinyl-[E2 ubiquitin-conjugating enzyme]-L-cysteine + [acceptor protein]-L-lysine = [E2 ubiquitin-conjugating enzyme]-L-cysteine + N(6)-ubiquitinyl-[acceptor protein]-L-lysine.. It participates in protein modification; protein ubiquitination. Functionally, E3 ubiquitin-protein ligase. Ubiquitinates BRAF, inducing its proteasomal degradation. This is E3 ubiquitin-protein ligase RNF149 (rnf149) from Xenopus laevis (African clawed frog).